The chain runs to 89 residues: Defensin-like protein 108 (89 aa).

The first 20 residues, Met-1–Cys-20, serve as a signal peptide directing secretion. Intrachain disulfides connect Cys-39–Cys-81, Cys-49–Cys-71, Cys-57–Cys-79, and Cys-61–Cys-80.

It belongs to the DEFL family.

Its subcellular location is the secreted. This Arabidopsis thaliana (Mouse-ear cress) protein is Defensin-like protein 108 (LCR51).